The chain runs to 331 residues: Lipoyl synthase (331 aa).

Over residues 1–14 (MSTQLDASQPSNDV) the composition is skewed to polar residues. Residues 1–32 (MSTQLDASQPSNDVASPAAYDPTQKQKSQAKT) are disordered. The [4Fe-4S] cluster site is built by Cys78, Cys83, Cys89, Cys104, Cys108, Cys111, and Ser318. One can recognise a Radical SAM core domain in the interval 89 to 307 (CFGKGTATFM…EREAYAMGFS (219 aa)).

It belongs to the radical SAM superfamily. Lipoyl synthase family. Requires [4Fe-4S] cluster as cofactor.

It is found in the cytoplasm. The enzyme catalyses [[Fe-S] cluster scaffold protein carrying a second [4Fe-4S](2+) cluster] + N(6)-octanoyl-L-lysyl-[protein] + 2 oxidized [2Fe-2S]-[ferredoxin] + 2 S-adenosyl-L-methionine + 4 H(+) = [[Fe-S] cluster scaffold protein] + N(6)-[(R)-dihydrolipoyl]-L-lysyl-[protein] + 4 Fe(3+) + 2 hydrogen sulfide + 2 5'-deoxyadenosine + 2 L-methionine + 2 reduced [2Fe-2S]-[ferredoxin]. Its pathway is protein modification; protein lipoylation via endogenous pathway; protein N(6)-(lipoyl)lysine from octanoyl-[acyl-carrier-protein]: step 2/2. Catalyzes the radical-mediated insertion of two sulfur atoms into the C-6 and C-8 positions of the octanoyl moiety bound to the lipoyl domains of lipoate-dependent enzymes, thereby converting the octanoylated domains into lipoylated derivatives. In Bordetella avium (strain 197N), this protein is Lipoyl synthase.